Here is a 358-residue protein sequence, read N- to C-terminus: ATP synthase gamma chain, chloroplastic (358 aa).

The N-terminal 35 residues, 1–35 (MAAMLASKQGAFMGRSSFAPAPKGVASRGSLQVVA), are a transit peptide targeting the chloroplast. The active site involves C123. Residues C233 and C239 are joined by a disulfide bond.

This sequence belongs to the ATPase gamma chain family. As to quaternary structure, F-type ATPases have 2 components, F(1) - the catalytic core - and F(0) - the membrane proton channel. F(1) has five subunits: alpha(3), beta(3), gamma(1), delta(1), epsilon(1). F(0) has four main subunits: a(1), b(1), b'(1) and c(10-14). The alpha and beta chains form an alternating ring which encloses part of the gamma chain. F(1) is attached to F(0) by a central stalk formed by the gamma and epsilon chains, while a peripheral stalk is formed by the delta, b and b' chains.

Its subcellular location is the plastid. It localises to the chloroplast thylakoid membrane. F(1)F(0) ATP synthase produces ATP from ADP in the presence of a proton or sodium gradient. F-type ATPases consist of two structural domains, F(1) containing the extramembraneous catalytic core and F(0) containing the membrane proton channel, linked together by a central stalk and a peripheral stalk. During catalysis, ATP synthesis in the catalytic domain of F(1) is coupled via a rotary mechanism of the central stalk subunits to proton translocation. In terms of biological role, produces ATP from ADP in the presence of a proton gradient across the membrane. The gamma chain is believed to be important in regulating ATPase activity and the flow of protons through the CF(0) complex. The chain is ATP synthase gamma chain, chloroplastic from Chlamydomonas reinhardtii (Chlamydomonas smithii).